A 143-amino-acid polypeptide reads, in one-letter code: Phosphoribosyl-AMP cyclohydrolase (143 aa).

Asp-86 serves as a coordination point for Mg(2+). Cys-87 is a binding site for Zn(2+). Mg(2+) contacts are provided by Asp-88 and Asp-90. The Zn(2+) site is built by Cys-103 and Cys-110.

Belongs to the PRA-CH family. Homodimer. Requires Mg(2+) as cofactor. Zn(2+) serves as cofactor.

It localises to the cytoplasm. The enzyme catalyses 1-(5-phospho-beta-D-ribosyl)-5'-AMP + H2O = 1-(5-phospho-beta-D-ribosyl)-5-[(5-phospho-beta-D-ribosylamino)methylideneamino]imidazole-4-carboxamide. Its pathway is amino-acid biosynthesis; L-histidine biosynthesis; L-histidine from 5-phospho-alpha-D-ribose 1-diphosphate: step 3/9. Its function is as follows. Catalyzes the hydrolysis of the adenine ring of phosphoribosyl-AMP. The polypeptide is Phosphoribosyl-AMP cyclohydrolase (Rhodospirillum rubrum (strain ATCC 11170 / ATH 1.1.1 / DSM 467 / LMG 4362 / NCIMB 8255 / S1)).